The sequence spans 116 residues: SPbeta prophage-derived uncharacterized protein YoqA (116 aa).

This Bacillus subtilis (strain 168) protein is SPbeta prophage-derived uncharacterized protein YoqA (yoqA).